Consider the following 299-residue polypeptide: MRIIFMGSPGFAVGALNLLLKLQSEVVAVYTKAPKPSGRRQRLTKSPVHIVAEKSDIEVCTPASLKSSIEQEKFGNFKPDVAVVAAYGLILPKEILNIPKYGCINIHPSLLPRWRGAAPIQHTILAGDQETGVSIMQLDEGLDSGPILKQKKFLIEKSDNYKTLYDKLSELGSDLLLKVLNEIEKQVPLKQSDNDACYADKVKDYKIYASDACEIAYRKVKAFYPKAFIKVENKRIKILDAEFEAFTSGQGEIINDNMHISLKGGTLIPKVVQMEGRNPCDIKDFVRGLKSSLTKKFIE.

Position 109–112 (109–112 (SLLP)) interacts with (6S)-5,6,7,8-tetrahydrofolate.

It belongs to the Fmt family.

The enzyme catalyses L-methionyl-tRNA(fMet) + (6R)-10-formyltetrahydrofolate = N-formyl-L-methionyl-tRNA(fMet) + (6S)-5,6,7,8-tetrahydrofolate + H(+). Attaches a formyl group to the free amino group of methionyl-tRNA(fMet). The formyl group appears to play a dual role in the initiator identity of N-formylmethionyl-tRNA by promoting its recognition by IF2 and preventing the misappropriation of this tRNA by the elongation apparatus. The sequence is that of Methionyl-tRNA formyltransferase from Wolbachia pipientis subsp. Culex pipiens (strain wPip).